We begin with the raw amino-acid sequence, 273 residues long: Dermonecrotic toxin LdSicTox-alphaIB1aii (273 aa).

Residue histidine 5 is part of the active site. Positions 25 and 27 each coordinate Mg(2+). Histidine 41 functions as the Nucleophile in the catalytic mechanism. 2 disulfide bridges follow: cysteine 45–cysteine 51 and cysteine 47–cysteine 190. Aspartate 85 lines the Mg(2+) pocket. The N-linked (GlcNAc...) asparagine glycan is linked to asparagine 250.

This sequence belongs to the arthropod phospholipase D family. Class II subfamily. Mg(2+) serves as cofactor. As to expression, expressed by the venom gland.

Its subcellular location is the secreted. It carries out the reaction an N-(acyl)-sphingosylphosphocholine = an N-(acyl)-sphingosyl-1,3-cyclic phosphate + choline. The enzyme catalyses an N-(acyl)-sphingosylphosphoethanolamine = an N-(acyl)-sphingosyl-1,3-cyclic phosphate + ethanolamine. It catalyses the reaction a 1-acyl-sn-glycero-3-phosphocholine = a 1-acyl-sn-glycero-2,3-cyclic phosphate + choline. The catalysed reaction is a 1-acyl-sn-glycero-3-phosphoethanolamine = a 1-acyl-sn-glycero-2,3-cyclic phosphate + ethanolamine. In terms of biological role, dermonecrotic toxins cleave the phosphodiester linkage between the phosphate and headgroup of certain phospholipids (sphingolipid and lysolipid substrates), forming an alcohol (often choline) and a cyclic phosphate. This toxin acts on sphingomyelin (SM). It may also act on ceramide phosphoethanolamine (CPE), lysophosphatidylcholine (LPC) and lysophosphatidylethanolamine (LPE), but not on lysophosphatidylserine (LPS), and lysophosphatidylglycerol (LPG). It acts by transphosphatidylation, releasing exclusively cyclic phosphate products as second products. Induces dermonecrosis, hemolysis, increased vascular permeability, edema, inflammatory response, and platelet aggregation. This is Dermonecrotic toxin LdSicTox-alphaIB1aii from Loxosceles deserta (Desert recluse spider).